The sequence spans 1288 residues: MGSPEGRFHFAIDRGGTFTDVFAQCPGGHVRVLKLLSEDPANYADAPTEGIRRILEQEEGVLLPRGRPLDTSRIASIRMGTTVATNALLERQGERVALLVTRGFRDLLHIGTQARPDLFDLAVPMPEVLYEEVLEVDERVVLYRGEPGAGSPVKGRTGDLLEIQQPVDLEALRGKLEGLLSRGIHSLAVVLMHSYTWAQHEQQVGTLARELGFTHVSLSSEVMPMVRIVPRGHTACADAYLTPTIQRYVQGFRRGFQGQLKNVQVLFMRSDGGLAPMDAFSGSRAVLSGPAGGVVGYSATTYHLEGGQPVIGFDMGGTSTDVSRYAGEFEHVFEASTAGVTLQAPQLDINTVAAGGGSRLFFRSGLFVVGPESAGAHPGPACYRKGGPVTVTDANLVLGRLLPASFPCIFGPGEDQPLSPEASRKALEAVAMEVNSFLTNGPCPASQLSLEEVAMGFVRVANEAMCRPIRALTQARGHDPSAHVLACFGGAGGQHACAIARALGMDTVHIHRHSGLLSALGLALADVVHEAQEPCSLSYTPETFAQLDQRLSRLEEQCVDALQVQGFPRSQISTESFLHLRYQGTDCALMVSAHQHPATACSPRAGDFGAAFVERYMREFGFIIPERPVVVDDVRVRGTGRSGLQLEDTPKIQTGPPHVEKVTQCYFEGGYQETPVYLLGELGYGHQLQGPCLIIDNNSTILVEPGCQAEVTDTGDIRISVGAEGPSMADTRLDPIQLSIFSHRFMSIAEQMGRILQRTAISTNIKERLDFSCALFGPDGGLVSNAPHIPVHLGAMQETVQFQIQHLGADLHPGDVLLSNHPSAGGSHLPDLTVITPVFWPGQTRPVFYVASRGHHADIGGITPGSMPPHSTTLQQEGAVFLSFKLVQGGVFQEEAVTEALRAPGKISGCSGTRNLHDNLSDLRAQVAANQKGIQLVGELIGQYGLDVVQAYMGHIQANAELAVRDMLRAFGTSRQARGLPLEVSAEDHMDDGSPICLRVQINLSQGSAVFDFTGSGSEVFGNLNAPRAITLSALIYCLRCLVGRDIPLNQGCLAPVRVIIPKGSILDPSPEAAVVGGNVLTSQRVVDVILGAFGACSASQGCMNNVTLGNARMGYYETVAGGAGAGPGWHGRSGVHSHMTNTRITDPEILESRYPVILRRFELRPGSGGRGRFRGGDGVVRELVFREEALLSVLTERRAFQPYGLHGGEPGARGLNLLIRKDGRTVNLGGKTSVTVYPGDVFCLHTPGGGGYGDPEDPAPPPGSPPLFPAFPERGSVFEYRRAQEAV.

Residues 1248–1270 form a disordered region; sequence PGGGGYGDPEDPAPPPGSPPLFP. A compositionally biased stretch (pro residues) spans 1259-1270; the sequence is PAPPPGSPPLFP. At serine 1265 the chain carries Phosphoserine.

The protein belongs to the oxoprolinase family. Homodimer. As to expression, expressed in testis, kidney and liver.

It is found in the cytoplasm. The protein localises to the cytosol. The catalysed reaction is 5-oxo-L-proline + ATP + 2 H2O = L-glutamate + ADP + phosphate + H(+). Catalyzes the cleavage of 5-oxo-L-proline to form L-glutamate coupled to the hydrolysis of ATP to ADP and inorganic phosphate. The chain is 5-oxoprolinase (Oplah) from Rattus norvegicus (Rat).